Consider the following 759-residue polypeptide: Glucosylceramidase (759 aa).

E247 acts as the Proton donor in catalysis. E497 (nucleophile) is an active-site residue. Residues 576–600 (AFENESQRDPQSPAYSESQRNTESY) form a disordered region. Over residues 584 to 599 (DPQSPAYSESQRNTES) the composition is skewed to polar residues.

This sequence belongs to the glycosyl hydrolase 5 (cellulase A) family.

It localises to the membrane. It carries out the reaction a beta-D-glucosyl-(1&lt;-&gt;1')-N-acylsphing-4-enine + H2O = an N-acylsphing-4-enine + D-glucose. Specifically hydrolyzes the glucosidic linkage in glucosylceramide. May prevent accumulation of aberrent glucosylceramide containing immature ceramide. This Aspergillus fumigatus (Neosartorya fumigata) protein is Glucosylceramidase.